Here is a 256-residue protein sequence, read N- to C-terminus: Type III pantothenate kinase (256 aa).

Position 6–13 (6–13) interacts with ATP; it reads DAGNSRIK. Substrate is bound by residues Y90 and 97-100; that span reads GSDR. Residue D99 is the Proton acceptor of the active site. Residue T123 coordinates ATP. T187 contacts substrate.

This sequence belongs to the type III pantothenate kinase family. Homodimer. NH4(+) is required as a cofactor. Requires K(+) as cofactor.

It is found in the cytoplasm. The enzyme catalyses (R)-pantothenate + ATP = (R)-4'-phosphopantothenate + ADP + H(+). The protein operates within cofactor biosynthesis; coenzyme A biosynthesis; CoA from (R)-pantothenate: step 1/5. Functionally, catalyzes the phosphorylation of pantothenate (Pan), the first step in CoA biosynthesis. The chain is Type III pantothenate kinase from Burkholderia mallei (strain NCTC 10247).